A 378-amino-acid chain; its full sequence is Nucleosome assembly protein 1;1 (378 aa).

A coiled-coil region spans residues 33–87 (VNALKDKLQSLAGQHTDVLEALSPNVRKRVEYLREIQGQHDEIELKFFEERAALE). Positions 54-69 (LSPNVRKRVEYLREIQ) match the Nuclear export signal motif. A Nuclear localization signal motif is present at residues 230–235 (KKKPKK). Residues 306–378 (AVQAEDFDDM…ADQPADCKQQ (73 aa)) form a disordered region. Residues 308–344 (QAEDFDDMEDDEEDDEDDDEDEEEEEEDEDEDEDDEE) show a composition bias toward acidic residues. The Nuclear localization signal motif lies at 348–352 (KPKKK). A compositionally biased stretch (low complexity) spans 356–378 (KPKLPSKGGAQGGADQPADCKQQ). The residue at position 375 (Cys-375) is a Cysteine methyl ester. The S-farnesyl cysteine moiety is linked to residue Cys-375. The propeptide at 376 to 378 (KQQ) is removed in mature form.

The protein belongs to the nucleosome assembly protein (NAP) family.

Its subcellular location is the nucleus. It localises to the cytoplasm. Its function is as follows. May modulate chromatin structure by regulation of nucleosome assembly/disassembly. The polypeptide is Nucleosome assembly protein 1;1 (NAP1;1) (Oryza sativa subsp. japonica (Rice)).